The following is a 498-amino-acid chain: NAD(P)H-quinone oxidoreductase chain 4, chloroplastic (498 aa).

Helical transmembrane passes span Phe4–Phe24, Tyr37–Leu57, Phe80–Ala100, Lys112–Phe129, Ile134–Met154, Phe167–Leu187, Ala208–Ile228, His242–Val262, Ala272–Ala292, Ile305–Glu325, Gly330–Gly350, Leu386–Thr406, Ile416–Ile436, and Phe463–Phe483.

Belongs to the complex I subunit 4 family.

The protein localises to the plastid. The protein resides in the chloroplast thylakoid membrane. It carries out the reaction a plastoquinone + NADH + (n+1) H(+)(in) = a plastoquinol + NAD(+) + n H(+)(out). It catalyses the reaction a plastoquinone + NADPH + (n+1) H(+)(in) = a plastoquinol + NADP(+) + n H(+)(out). The protein is NAD(P)H-quinone oxidoreductase chain 4, chloroplastic of Phaseolus vulgaris (Kidney bean).